The following is a 298-amino-acid chain: N-acetylmuramic acid 6-phosphate etherase (298 aa).

The 164-residue stretch at 55–218 (IHAQVSGGGR…STGLMIKSGK (164 aa)) folds into the SIS domain. Residue glutamate 83 is the Proton donor of the active site. Glutamate 114 is a catalytic residue.

The protein belongs to the GCKR-like family. MurNAc-6-P etherase subfamily. Homodimer.

It catalyses the reaction N-acetyl-D-muramate 6-phosphate + H2O = N-acetyl-D-glucosamine 6-phosphate + (R)-lactate. It participates in amino-sugar metabolism; 1,6-anhydro-N-acetylmuramate degradation. Its pathway is amino-sugar metabolism; N-acetylmuramate degradation. It functions in the pathway cell wall biogenesis; peptidoglycan recycling. In terms of biological role, specifically catalyzes the cleavage of the D-lactyl ether substituent of MurNAc 6-phosphate, producing GlcNAc 6-phosphate and D-lactate. Together with AnmK, is also required for the utilization of anhydro-N-acetylmuramic acid (anhMurNAc) either imported from the medium or derived from its own cell wall murein, and thus plays a role in cell wall recycling. The polypeptide is N-acetylmuramic acid 6-phosphate etherase (Escherichia coli O157:H7 (strain EC4115 / EHEC)).